We begin with the raw amino-acid sequence, 114 residues long: Ribosome-binding factor A (114 aa).

This sequence belongs to the RbfA family. As to quaternary structure, monomer. Binds 30S ribosomal subunits, but not 50S ribosomal subunits or 70S ribosomes.

It localises to the cytoplasm. In terms of biological role, one of several proteins that assist in the late maturation steps of the functional core of the 30S ribosomal subunit. Associates with free 30S ribosomal subunits (but not with 30S subunits that are part of 70S ribosomes or polysomes). Required for efficient processing of 16S rRNA. May interact with the 5'-terminal helix region of 16S rRNA. The sequence is that of Ribosome-binding factor A from Staphylococcus saprophyticus subsp. saprophyticus (strain ATCC 15305 / DSM 20229 / NCIMB 8711 / NCTC 7292 / S-41).